A 115-amino-acid chain; its full sequence is Viral Lymphotactin (115 aa).

A signal peptide spans 1–19 (MRLLTILALCCVAIWVVES). Cys-30 and Cys-67 are oxidised to a cystine.

This sequence belongs to the intercrine gamma family. As to quaternary structure, interacts with host XCR1. In terms of processing, N-glycosylated and O-glycosylated.

The protein resides in the secreted. Functionally, chemoattractant for CD4-dendritic cells, but not for CD4+ dendritic cells, T-cells or B-cells. The protein is Viral Lymphotactin (vXCL1) of Rat cytomegalovirus (isolate England) (RCMV-E).